The following is an 86-amino-acid chain: Photosystem I reaction center subunit PsaK 1 (86 aa).

A run of 2 helical transmembrane segments spans residues 14-34 and 61-81; these read LSWS…AIAF and AVLG…LGLA.

It belongs to the PsaG/PsaK family.

It is found in the cellular thylakoid membrane. The protein is Photosystem I reaction center subunit PsaK 1 (psaK1) of Synechocystis sp. (strain ATCC 27184 / PCC 6803 / Kazusa).